The chain runs to 968 residues: RNA polymerase-associated protein RapA (968 aa).

The 171-residue stretch at 164–334 folds into the Helicase ATP-binding domain; that stretch reads DVGRRHAPRV…FARLRLLDPN (171 aa). Residue 177 to 184 coordinates ATP; sequence DEVGLGKT. The DEAH box signature appears at 280-283; the sequence is DEAH. Residues 490-644 form the Helicase C-terminal domain; sequence RVEWLMGYLT…TCPTGRTVYD (155 aa).

This sequence belongs to the SNF2/RAD54 helicase family. RapA subfamily. As to quaternary structure, interacts with the RNAP. Has a higher affinity for the core RNAP than for the holoenzyme. Its ATPase activity is stimulated by binding to RNAP.

Its function is as follows. Transcription regulator that activates transcription by stimulating RNA polymerase (RNAP) recycling in case of stress conditions such as supercoiled DNA or high salt concentrations. Probably acts by releasing the RNAP, when it is trapped or immobilized on tightly supercoiled DNA. Does not activate transcription on linear DNA. Probably not involved in DNA repair. This Klebsiella pneumoniae (strain 342) protein is RNA polymerase-associated protein RapA.